The chain runs to 126 residues: Aspartate 1-decarboxylase (126 aa).

The Schiff-base intermediate with substrate; via pyruvic acid role is filled by S25. Residue S25 is modified to Pyruvic acid (Ser). T57 provides a ligand contact to substrate. The Proton donor role is filled by Y58. 73–75 (GAA) is a substrate binding site.

The protein belongs to the PanD family. Heterooctamer of four alpha and four beta subunits. Requires pyruvate as cofactor. Post-translationally, is synthesized initially as an inactive proenzyme, which is activated by self-cleavage at a specific serine bond to produce a beta-subunit with a hydroxyl group at its C-terminus and an alpha-subunit with a pyruvoyl group at its N-terminus.

The protein localises to the cytoplasm. The enzyme catalyses L-aspartate + H(+) = beta-alanine + CO2. The protein operates within cofactor biosynthesis; (R)-pantothenate biosynthesis; beta-alanine from L-aspartate: step 1/1. Catalyzes the pyruvoyl-dependent decarboxylation of aspartate to produce beta-alanine. The protein is Aspartate 1-decarboxylase of Cronobacter sakazakii (strain ATCC BAA-894) (Enterobacter sakazakii).